A 154-amino-acid polypeptide reads, in one-letter code: Ribonuclease H (154 aa).

Positions 1–142 (MRKQIEIFTD…CDELAKQGAE (142 aa)) constitute an RNase H type-1 domain. Asp-10, Glu-48, Asp-70, and Asp-134 together coordinate Mg(2+).

The protein belongs to the RNase H family. In terms of assembly, monomer. It depends on Mg(2+) as a cofactor.

The protein resides in the cytoplasm. It carries out the reaction Endonucleolytic cleavage to 5'-phosphomonoester.. Endonuclease that specifically degrades the RNA of RNA-DNA hybrids. This Actinobacillus succinogenes (strain ATCC 55618 / DSM 22257 / CCUG 43843 / 130Z) protein is Ribonuclease H.